The sequence spans 272 residues: 27-O-demethylrifamycin SV methyltransferase (272 aa).

S-adenosyl-L-methionine-binding positions include S89, Q94, 117–118 (DA), L134, and H139.

The protein belongs to the class I-like SAM-binding methyltransferase superfamily. As to quaternary structure, exists probably as a trimer.

The enzyme catalyses 27-O-demethylrifamycin SV + S-adenosyl-L-methionine = rifamycin SV + S-adenosyl-L-homocysteine + H(+). It participates in antibiotic biosynthesis; rifamycin B biosynthesis. Its activity is regulated as follows. Slightly inhibited by Ca(2+) and Mg(2+). Strongly inhibited by Zn(2+), Ni(2+) and Co(2+). Its function is as follows. Catalyzes the methylation of 27-O-demethylrifamycin SV (DMRSV) to rifamycin SV. This chain is 27-O-demethylrifamycin SV methyltransferase, found in Amycolatopsis mediterranei (strain S699) (Nocardia mediterranei).